The following is a 762-amino-acid chain: cGMP-dependent protein kinase 2 (762 aa).

A disordered region spans residues 1-25 (MGNGSVKPKHSKHPDGHSGNLTTDA). Glycine 2 carries the N-myristoyl glycine lipid modification. The stretch at 23-85 (TDALRNKVTE…CIQLNKLQDV (63 aa)) forms a coiled coil. Phosphoserine is present on residues serine 110 and serine 117. The interval 117-138 (SRRGAKAGVSAEPTTRTYDLNK) is disordered. The tract at residues 168–283 (FLKRLDPQQI…DEQYRNFLRS (116 aa)) is cGMP-binding, high affinity; cAMP-binding, moderate affinity. 3',5'-cyclic AMP-binding positions include 232–235 (GELA) and 242–243 (RT). 3',5'-cyclic GMP-binding positions include 232 to 235 (GELA), 242 to 243 (RT), lysine 347, 356 to 359 (GEKA), 366 to 367 (RS), aspartate 412, and arginine 415. The cGMP-binding, high affinity; cAMP-binding, low affinity stretch occupies residues 286 to 416 (LLKNLPEDKL…NLNRDDEKRH (131 aa)). At serine 431 the chain carries Phosphoserine. The 259-residue stretch at 453–711 (LEIIATLGVG…INDIKKHRWL (259 aa)) folds into the Protein kinase domain. ATP-binding positions include 459-467 (LGVGGFGRV) and lysine 482. Aspartate 576 functions as the Proton acceptor in the catalytic mechanism. Threonine 609 bears the Phosphothreonine mark. In terms of domain architecture, AGC-kinase C-terminal spans 712-762 (NGFNWEGLKARSLPSPLQRELKGPIDHSYFDKYPPEKGMPPDELSGWDKDF). Residues 740-762 (YFDKYPPEKGMPPDELSGWDKDF) form a disordered region.

The protein belongs to the protein kinase superfamily. AGC Ser/Thr protein kinase family. cGMP subfamily. As to quaternary structure, interacts with GRIA1/GLUR1. In terms of processing, myristoylation mediates membrane localization. In terms of tissue distribution, highly concentrated in brain, lung and intestinal mucosa.

The protein resides in the apical cell membrane. The enzyme catalyses L-seryl-[protein] + ATP = O-phospho-L-seryl-[protein] + ADP + H(+). It catalyses the reaction L-threonyl-[protein] + ATP = O-phospho-L-threonyl-[protein] + ADP + H(+). Its activity is regulated as follows. Binding of cGMP results in enzyme activation. In terms of biological role, crucial regulator of intestinal secretion and bone growth. Phosphorylates and activates CFTR on the plasma membrane. Plays a key role in intestinal secretion by regulating cGMP-dependent translocation of CFTR in jejunum. Acts downstream of NMDAR to activate the plasma membrane accumulation of GRIA1/GLUR1 in synapse and increase synaptic plasticity. Phosphorylates GRIA1/GLUR1 at Ser-863. Acts as a regulator of gene expression and activator of the extracellular signal-regulated kinases MAPK3/ERK1 and MAPK1/ERK2 in mechanically stimulated osteoblasts. Under fluid shear stress, mediates ERK activation and subsequent induction of FOS, FOSL1/FRA1, FOSL2/FRA2 and FOSB that play a key role in the osteoblast anabolic response to mechanical stimulation. The sequence is that of cGMP-dependent protein kinase 2 (PRKG2) from Homo sapiens (Human).